A 402-amino-acid chain; its full sequence is MKISNASLLALLLPAASARFVEQAEQNRVMLFPDGIPEEPKSTTKYHIELSPGDTRWVTEDEKWELRRNGQRFFDITDHAELGTFNKRPYKKSVFPKKPTQKKDLEPLLKNLSKTEMEDHLTTFTSFHTRYYKSESGRQSSEWLLKQVRDTIKAAGADDTVTARHFEHAWGQNSIIATIPGKTNATVVIGAHQDSINLWLPSVLAAPGADDDGSGTVTILEAFRVLLQSEDIIKGNHENTIEFHWYSAEEGGLLGSQAIFTTYEKARRDVKAMLQQDMTGFVSRTLQAGEVESVGVIVDYVDPNLTDFIKKIIVEYCDIPYVETKCGYACSDHASASKAGYPSAFVIESAFEYSDNHIHTTDDLIKYLSFDHMLQHARMTLAFAYELAFADFAKLEKGHGDL.

The signal sequence occupies residues methionine 1 to alanine 18. Residues arginine 19–lysine 92 constitute a propeptide that is removed on maturation. N-linked (GlcNAc...) asparagine glycosylation is found at asparagine 111 and asparagine 184. Zn(2+) contacts are provided by histidine 192, aspartate 211, glutamate 250, and aspartate 277. Residue asparagine 304 is glycosylated (N-linked (GlcNAc...) asparagine). Cysteine 326 and cysteine 330 form a disulfide bridge. Position 359 (histidine 359) interacts with Zn(2+).

Belongs to the peptidase M28 family. M28E subfamily. Monomer. Zn(2+) serves as cofactor.

The protein localises to the secreted. In terms of biological role, extracellular aminopeptidase that allows assimilation of proteinaceous substrates. The sequence is that of Leucine aminopeptidase 1 (lap1) from Neurospora crassa (strain ATCC 24698 / 74-OR23-1A / CBS 708.71 / DSM 1257 / FGSC 987).